Here is a 724-residue protein sequence, read N- to C-terminus: Catalase-peroxidase (724 aa).

Positions 98 to 226 form a cross-link, tryptophyl-tyrosyl-methioninium (Trp-Tyr) (with M-252); that stretch reads WHSAGTYRIA…LAAVMMGLIY (129 aa). His99 acts as the Proton acceptor in catalysis. The segment at residues 226–252 is a cross-link (tryptophyl-tyrosyl-methioninium (Tyr-Met) (with W-98)); that stretch reads YVNPEGVDGNPDPLKTAQDMRVTFARM. Residue His267 participates in heme b binding.

This sequence belongs to the peroxidase family. Peroxidase/catalase subfamily. As to quaternary structure, homodimer or homotetramer. Requires heme b as cofactor. Formation of the three residue Trp-Tyr-Met cross-link is important for the catalase, but not the peroxidase activity of the enzyme.

The enzyme catalyses H2O2 + AH2 = A + 2 H2O. The catalysed reaction is 2 H2O2 = O2 + 2 H2O. Bifunctional enzyme with both catalase and broad-spectrum peroxidase activity. The protein is Catalase-peroxidase of Vibrio cholerae serotype O1 (strain ATCC 39315 / El Tor Inaba N16961).